A 136-amino-acid polypeptide reads, in one-letter code: Small ribosomal subunit protein uS9 (136 aa).

The protein belongs to the universal ribosomal protein uS9 family.

This Borrelia recurrentis (strain A1) protein is Small ribosomal subunit protein uS9.